A 219-amino-acid polypeptide reads, in one-letter code: Protoglabretal synthase ISM2 (219 aa).

5 consecutive transmembrane segments (helical) span residues 26 to 46, 59 to 79, 112 to 132, 144 to 164, and 178 to 198; these read VHAW…VLAG, LMIW…YWLF, AVVG…LFAV, ILQL…FITA, and YYKY…LIII. The EXPERA domain occupies 55 to 197; that stretch reads TDKWLMIWWA…TWLLFPALII (143 aa).

This sequence belongs to the EBP family.

Its subcellular location is the membrane. It catalyses the reaction 7,8-epoxymelianol = protoglabretal. It participates in secondary metabolite biosynthesis; terpenoid biosynthesis. Isomerase involved in the biosynthesis of glabretanes triterpene natural products such as glabretal, a component with in vitro antiproliferative properties on lymphocytes. Catalyzes the conversion of 7,8-epoxymelianol to protoglabretal via skeletal rearrangements. The polypeptide is Protoglabretal synthase ISM2 (Ailanthus altissima (Tree-of-heaven)).